Reading from the N-terminus, the 269-residue chain is Cytochrome c oxidase subunit 3 (269 aa).

7 helical membrane-spanning segments follow: residues 7–29 (GYLQLHPFHLVGPSPWPIFTSFS), 51–71 (IILSIITVLYSMTLWFKDIIA), 90–110 (GFLLFVVSEILIFASLFWAYL), 127–147 (VGIDVISPAELPLLNTIILLA), 167–187 (TLYGFIYSTLLIALFVMFQFL), 205–225 (FYSLTGLHGLHMIMLTIMLVI), and 247–267 (ILYLHVLDVIWLFIYIIVYWW).

It belongs to the cytochrome c oxidase subunit 3 family. Component of the cytochrome c oxidase (complex IV, CIV), a multisubunit enzyme composed of a catalytic core of 3 subunits and several supernumerary subunits. The complex exists as a monomer or a dimer and forms supercomplexes (SCs) in the inner mitochondrial membrane with ubiquinol-cytochrome c oxidoreductase (cytochrome b-c1 complex, complex III, CIII).

It is found in the mitochondrion inner membrane. It carries out the reaction 4 Fe(II)-[cytochrome c] + O2 + 8 H(+)(in) = 4 Fe(III)-[cytochrome c] + 2 H2O + 4 H(+)(out). In terms of biological role, component of the cytochrome c oxidase, the last enzyme in the mitochondrial electron transport chain which drives oxidative phosphorylation. The respiratory chain contains 3 multisubunit complexes succinate dehydrogenase (complex II, CII), ubiquinol-cytochrome c oxidoreductase (cytochrome b-c1 complex, complex III, CIII) and cytochrome c oxidase (complex IV, CIV), that cooperate to transfer electrons derived from NADH and succinate to molecular oxygen, creating an electrochemical gradient over the inner membrane that drives transmembrane transport and the ATP synthase. Cytochrome c oxidase is the component of the respiratory chain that catalyzes the reduction of oxygen to water. Electrons originating from reduced cytochrome c in the intermembrane space (IMS) are transferred via the dinuclear copper A center (CU(A)) of subunit 2 and heme A of subunit 1 to the active site in subunit 1, a binuclear center (BNC) formed by heme A3 and copper B (CU(B)). The BNC reduces molecular oxygen to 2 water molecules using 4 electrons from cytochrome c in the IMS and 4 protons from the mitochondrial matrix. This Candida parapsilosis (Yeast) protein is Cytochrome c oxidase subunit 3 (COX3).